Consider the following 242-residue polypeptide: Biosynthetic peptidoglycan transglycosylase (242 aa).

The helical transmembrane segment at 19-39 (LMVVLAVFWGGGIALFSVAPV) threads the bilayer.

It belongs to the glycosyltransferase 51 family.

The protein localises to the cell inner membrane. The catalysed reaction is [GlcNAc-(1-&gt;4)-Mur2Ac(oyl-L-Ala-gamma-D-Glu-L-Lys-D-Ala-D-Ala)](n)-di-trans,octa-cis-undecaprenyl diphosphate + beta-D-GlcNAc-(1-&gt;4)-Mur2Ac(oyl-L-Ala-gamma-D-Glu-L-Lys-D-Ala-D-Ala)-di-trans,octa-cis-undecaprenyl diphosphate = [GlcNAc-(1-&gt;4)-Mur2Ac(oyl-L-Ala-gamma-D-Glu-L-Lys-D-Ala-D-Ala)](n+1)-di-trans,octa-cis-undecaprenyl diphosphate + di-trans,octa-cis-undecaprenyl diphosphate + H(+). The protein operates within cell wall biogenesis; peptidoglycan biosynthesis. Peptidoglycan polymerase that catalyzes glycan chain elongation from lipid-linked precursors. The protein is Biosynthetic peptidoglycan transglycosylase of Escherichia coli (strain ATCC 8739 / DSM 1576 / NBRC 3972 / NCIMB 8545 / WDCM 00012 / Crooks).